We begin with the raw amino-acid sequence, 530 residues long: Netrin-G2 (530 aa).

Residues 1–17 (MLHLLALFLHCLPLASG) form the signal peptide. 3 disulfides stabilise this stretch: Cys22/Cys39, Cys61/Cys81, and Cys69/Cys77. In terms of domain architecture, Laminin N-terminal spans 35 to 286 (EFYACQPKVM…AISNIEVIGR (252 aa)). The NGL discriminant loop I stretch occupies residues 69 to 88 (CSHENPYLCSNECDASNPDL). Residues Asn122 and Asn128 are each glycosylated (N-linked (GlcNAc...) asparagine). Cys171 and Cys195 form a disulfide bridge. The NGL discriminant loop II stretch occupies residues 201-203 (RWA). An NGL discriminant loop III region spans residues 264–267 (TYVQ). 15 disulfides stabilise this stretch: Cys287-Cys296, Cys289-Cys305, Cys307-Cys316, Cys319-Cys344, Cys353-Cys362, Cys355-Cys373, Cys376-Cys385, Cys388-Cys406, Cys409-Cys421, Cys411-Cys427, Cys429-Cys438, Cys441-Cys451, Cys456-Cys469, Cys463-Cys475, and Cys477-Cys486. Laminin EGF-like domains are found at residues 287-346 (CKCN…ACAT), 353-408 (CECY…VCIE), and 409-453 (CNCN…GCYP). Residue Asn310 is glycosylated (N-linked (GlcNAc...) asparagine). The N-linked (GlcNAc...) asparagine glycan is linked to Asn395. Asn422 carries N-linked (GlcNAc...) asparagine glycosylation. The GPI-anchor amidated glycine moiety is linked to residue Gly507. A propeptide spans 508–530 (AAPRPATLLGCLLLLGLAARLGR) (removed in mature form).

In terms of assembly, interacts with LRRC4. N-glycosylated.

It is found in the cell membrane. Its function is as follows. Involved in controlling patterning and neuronal circuit formation at the laminar, cellular, subcellular and synaptic levels. Promotes neurite outgrowth of both axons and dendrites. The chain is Netrin-G2 from Homo sapiens (Human).